Here is a 243-residue protein sequence, read N- to C-terminus: NEDD4-binding protein 2-like 1 (243 aa).

A disordered region spans residues 1-38 (MEDSFLQSFGRLSLQPQQQQQRQRPPRPPPRGTPPRRH).

Interacts with dynactin subunit proteins, including DCTN4, DCTN5 and DCTN5.

In terms of biological role, might play a role in adipocyte differentiation and triglyceride accumulation. This Homo sapiens (Human) protein is NEDD4-binding protein 2-like 1 (N4BP2L1).